The primary structure comprises 242 residues: Uridylate kinase (242 aa).

17 to 20 (KLSG) is an ATP binding site. Gly59 contributes to the UMP binding site. ATP is bound by residues Gly60 and Arg64. UMP is bound by residues Asp79 and 140–147 (LGNPFFTT). The ATP site is built by Thr167, Tyr173, and Asp176.

The protein belongs to the UMP kinase family. In terms of assembly, homohexamer.

It is found in the cytoplasm. It catalyses the reaction UMP + ATP = UDP + ADP. Its pathway is pyrimidine metabolism; CTP biosynthesis via de novo pathway; UDP from UMP (UMPK route): step 1/1. Its activity is regulated as follows. Inhibited by UTP. Catalyzes the reversible phosphorylation of UMP to UDP. In Buchnera aphidicola subsp. Baizongia pistaciae (strain Bp), this protein is Uridylate kinase.